The sequence spans 309 residues: Sulfate adenylyltransferase subunit 2 (309 aa).

It belongs to the PAPS reductase family. CysD subfamily. Heterodimer composed of CysD, the smaller subunit, and CysN.

The enzyme catalyses sulfate + ATP + H(+) = adenosine 5'-phosphosulfate + diphosphate. Its pathway is sulfur metabolism; hydrogen sulfide biosynthesis; sulfite from sulfate: step 1/3. In terms of biological role, with CysN forms the ATP sulfurylase (ATPS) that catalyzes the adenylation of sulfate producing adenosine 5'-phosphosulfate (APS) and diphosphate, the first enzymatic step in sulfur assimilation pathway. APS synthesis involves the formation of a high-energy phosphoric-sulfuric acid anhydride bond driven by GTP hydrolysis by CysN coupled to ATP hydrolysis by CysD. The protein is Sulfate adenylyltransferase subunit 2 of Mycobacterium sp. (strain JLS).